The sequence spans 397 residues: Elongation factor Tu (397 aa).

In terms of domain architecture, tr-type G spans 10–206 (KPHVNIGTIG…AVDDSIPEPQ (197 aa)). The segment at 19 to 26 (GHIDHGKT) is G1. 19–26 (GHIDHGKT) is a GTP binding site. Position 26 (Thr26) interacts with Mg(2+). The segment at 62 to 66 (GITIS) is G2. A G3 region spans residues 83-86 (DCPG). GTP is bound by residues 83–87 (DCPGH) and 138–141 (NKAD). A G4 region spans residues 138–141 (NKAD). The G5 stretch occupies residues 176–178 (SAL).

It belongs to the TRAFAC class translation factor GTPase superfamily. Classic translation factor GTPase family. EF-Tu/EF-1A subfamily. Monomer.

The protein resides in the cytoplasm. It catalyses the reaction GTP + H2O = GDP + phosphate + H(+). Its function is as follows. GTP hydrolase that promotes the GTP-dependent binding of aminoacyl-tRNA to the A-site of ribosomes during protein biosynthesis. In Frankia alni (strain DSM 45986 / CECT 9034 / ACN14a), this protein is Elongation factor Tu.